The following is a 171-amino-acid chain: Peptide deformylase (171 aa).

Fe cation is bound by residues cysteine 87 and histidine 129. The active site involves glutamate 130. Histidine 133 serves as a coordination point for Fe cation.

This sequence belongs to the polypeptide deformylase family. Requires Fe(2+) as cofactor.

It catalyses the reaction N-terminal N-formyl-L-methionyl-[peptide] + H2O = N-terminal L-methionyl-[peptide] + formate. Removes the formyl group from the N-terminal Met of newly synthesized proteins. Requires at least a dipeptide for an efficient rate of reaction. N-terminal L-methionine is a prerequisite for activity but the enzyme has broad specificity at other positions. This chain is Peptide deformylase, found in Pseudothermotoga lettingae (strain ATCC BAA-301 / DSM 14385 / NBRC 107922 / TMO) (Thermotoga lettingae).